Here is a 214-residue protein sequence, read N- to C-terminus: Cysteine-rich venom protein LEI1 (214 aa).

A signal peptide spans Met-1–Gly-18. Positions Val-37–Tyr-165 constitute an SCP domain. 5 disulfide bridges follow: Cys-74–Cys-152, Cys-91–Cys-166, Cys-147–Cys-163, Cys-185–Cys-192, and Cys-188–Cys-197. In terms of domain architecture, ShKT spans Cys-201–Val-214.

It belongs to the CRISP family. Expressed by the venom gland.

It is found in the secreted. In terms of biological role, blocks contraction of smooth muscle elicited by high potassium-induced depolarization, but does not block caffeine-stimulated contraction. May target voltage-gated calcium channels on smooth muscle. The sequence is that of Cysteine-rich venom protein LEI1 from Leioheterodon madagascariensis (Malagasy giant hognose snake).